The following is a 126-amino-acid chain: Fluoride-specific ion channel FluC 2 (126 aa).

4 helical membrane passes run 11-31 (IFLIGAGGFLGAICRFSLCEL), 43-63 (VLGSFMLGLIMYDTEYIGFIG), 69-89 (AFGTGFMGAFTTFSTFAVQSF), and 93-113 (FFPALENISVNLFLALVGVFM). Residues Gly76 and Thr79 each contribute to the Na(+) site.

This sequence belongs to the fluoride channel Fluc/FEX (TC 1.A.43) family.

It localises to the cell membrane. It catalyses the reaction fluoride(in) = fluoride(out). Na(+) is not transported, but it plays an essential structural role and its presence is essential for fluoride channel function. Fluoride-specific ion channel. Important for reducing fluoride concentration in the cell, thus reducing its toxicity. The sequence is that of Fluoride-specific ion channel FluC 2 from Methanosarcina barkeri (strain Fusaro / DSM 804).